The sequence spans 99 residues: High mobility group protein I (99 aa).

Positions 1 to 99 (MSDSPVKKGR…ADTEEVNSSD (99 aa)) are disordered. Ser4 carries the post-translational modification Phosphoserine; by CDC2 and MAPK. Positions 7 to 19 (KKGRGRPAKAKPE) form a DNA-binding region, a.T hook 1. Positions 16 to 46 (AKPEETASPKAAKKEEKKVEEVPKKIEESTK) are enriched in basic and acidic residues. Phosphoserine; by MAPK is present on Ser23. The segment at residues 54–66 (KKGRGRPSKGDKA) is a DNA-binding region (a.T hook 2). Residue Ser73 is modified to Phosphoserine; by PKC. Residues 74–86 (GKGRGRPAKNAKK) constitute a DNA-binding region (a.T hook 3). Over residues 90-99 (ADTEEVNSSD) the composition is skewed to acidic residues.

This sequence belongs to the HMGA family. Phosphorylated in a cell-cycle dependent manner; substantially reduced in cells that have finished proliferating and are differentiated. Phosphorylation at Ser-4 and Ser-23 results in a 10-fold weakening of DNA-binding activity and altered the mode of protein-DNA interaction.

The protein resides in the nucleus. It localises to the nucleolus. Its subcellular location is the chromosome. Binds preferentially to the minor groove of A+T rich regions in double-stranded DNA via the second and third DBA-binding domains. It is suggested that these proteins could function in nucleosome phasing and in the 3'-end processing of mRNA transcripts. They are also involved in the transcription regulation of genes containing, or in close proximity to A+T-rich regions. This Chironomus tentans (Midge) protein is High mobility group protein I.